The sequence spans 153 residues: Aspartate carbamoyltransferase regulatory chain (153 aa).

Positions 109, 114, 138, and 141 each coordinate Zn(2+).

Belongs to the PyrI family. In terms of assembly, contains catalytic and regulatory chains. It depends on Zn(2+) as a cofactor.

Its function is as follows. Involved in allosteric regulation of aspartate carbamoyltransferase. This chain is Aspartate carbamoyltransferase regulatory chain, found in Enterobacter sp. (strain 638).